The following is a 155-amino-acid chain: RNA pyrophosphohydrolase (155 aa).

The region spanning 5–147 (KYRPNVAAII…KRQVYRQVIA (143 aa)) is the Nudix hydrolase domain. The Nudix box signature appears at 42–63 (GGIDEGETPLEALHRELLEEIG).

This sequence belongs to the Nudix hydrolase family. RppH subfamily. Requires a divalent metal cation as cofactor.

Functionally, accelerates the degradation of transcripts by removing pyrophosphate from the 5'-end of triphosphorylated RNA, leading to a more labile monophosphorylated state that can stimulate subsequent ribonuclease cleavage. This is RNA pyrophosphohydrolase from Helicobacter pylori (strain G27).